A 215-amino-acid chain; its full sequence is Large ribosomal subunit protein uL3 (215 aa).

The segment at 136–155 (GVSISHRSHGSTGQRQDPGK) is disordered. Residue glutamine 151 is modified to N5-methylglutamine.

Belongs to the universal ribosomal protein uL3 family. In terms of assembly, part of the 50S ribosomal subunit. Forms a cluster with proteins L14 and L19. In terms of processing, methylated by PrmB.

Functionally, one of the primary rRNA binding proteins, it binds directly near the 3'-end of the 23S rRNA, where it nucleates assembly of the 50S subunit. The sequence is that of Large ribosomal subunit protein uL3 from Rickettsia felis (strain ATCC VR-1525 / URRWXCal2) (Rickettsia azadi).